The sequence spans 354 residues: N-acylethanolamine-hydrolyzing acid amidase (354 aa).

A signal peptide spans 1 to 22; the sequence is MRSPGIVLLLLLLLLLPPGAAP. Asn-35 and Asn-104 each carry an N-linked (GlcNAc...) asparagine glycan. Cys-123 functions as the Nucleophile in the catalytic mechanism. Asn-306, Asn-312, and Asn-352 each carry an N-linked (GlcNAc...) asparagine glycan.

It belongs to the acid ceramidase family. Heterodimer of an alpha and a beta subunit, produced by autocatalytic cleavage. N-glycosylated. Tunicamycin treatment causes a reduction in specific activity against N-palmitoylethanolamine. Post-translationally, autoproteolytic cleavage at pH 4.5 gives rise to the alpha and beta subunit. Cleavage gives rise to a conformation change that activates the enzyme. The same catalytic Cys residue mediates the autoproteolytic cleavage and subsequent hydrolysis of lipid substrates.

Its subcellular location is the lysosome. It is found in the membrane. It catalyses the reaction N-hexadecanoylethanolamine + H2O = ethanolamine + hexadecanoate. The catalysed reaction is an N-(long-chain fatty acyl)ethanolamine + H2O = a long-chain fatty acid + ethanolamine. It carries out the reaction N-dodecanoylethanolamine + H2O = dodecanoate + ethanolamine. The enzyme catalyses N-tetradecanoylethanolamine + H2O = tetradecanoate + ethanolamine. It catalyses the reaction an N-acylsphing-4-enine + H2O = sphing-4-enine + a fatty acid. The catalysed reaction is N-hexadecanoylsphing-4-enine + H2O = sphing-4-enine + hexadecanoate. It carries out the reaction N-dodecanoylsphing-4-enine + H2O = dodecanoate + sphing-4-enine. It functions in the pathway lipid metabolism; fatty acid metabolism. Degrades bioactive fatty acid amides to their corresponding acids, with the following preference: N-palmitoylethanolamine &gt; N-myristoylethanolamine &gt; N-stearoylethanolamine &gt; N-oleoylethanolamine &gt; N-linoleoylethanolamine &gt; N-arachidonoylethanolamine. In Cavia porcellus (Guinea pig), this protein is N-acylethanolamine-hydrolyzing acid amidase.